We begin with the raw amino-acid sequence, 238 residues long: Orotidine 5'-phosphate decarboxylase (238 aa).

Residues aspartate 10, lysine 32, 59–68 (DLKLHDIPNT), threonine 122, arginine 184, glutamine 193, glycine 213, and arginine 214 each bind substrate. Lysine 61 (proton donor) is an active-site residue.

Belongs to the OMP decarboxylase family. Type 1 subfamily. As to quaternary structure, homodimer.

The enzyme catalyses orotidine 5'-phosphate + H(+) = UMP + CO2. Its pathway is pyrimidine metabolism; UMP biosynthesis via de novo pathway; UMP from orotate: step 2/2. Catalyzes the decarboxylation of orotidine 5'-monophosphate (OMP) to uridine 5'-monophosphate (UMP). The protein is Orotidine 5'-phosphate decarboxylase of Bacillus cereus (strain Q1).